Here is a 156-residue protein sequence, read N- to C-terminus: Small ribosomal subunit protein uS7 (156 aa).

Belongs to the universal ribosomal protein uS7 family. In terms of assembly, part of the 30S ribosomal subunit. Contacts proteins S9 and S11.

Its function is as follows. One of the primary rRNA binding proteins, it binds directly to 16S rRNA where it nucleates assembly of the head domain of the 30S subunit. Is located at the subunit interface close to the decoding center, probably blocks exit of the E-site tRNA. This is Small ribosomal subunit protein uS7 from Geobacillus kaustophilus (strain HTA426).